Reading from the N-terminus, the 175-residue chain is Gamma-crystallin-1 (175 aa).

Beta/gamma crystallin 'Greek key' domains are found at residues 2–40 (GKIF…RVEG) and 41–83 (GNWI…RFLP). The tract at residues 84–88 (NYQGQ) is connecting peptide. 2 consecutive Beta/gamma crystallin 'Greek key' domains span residues 89–129 (YKMR…NVFD) and 130–172 (GHWM…RRVY).

The protein belongs to the beta/gamma-crystallin family. Monomer.

Functionally, crystallins are the dominant structural components of the vertebrate eye lens. In Xenopus laevis (African clawed frog), this protein is Gamma-crystallin-1 (cryg1).